We begin with the raw amino-acid sequence, 441 residues long: METQCRPQVRCLDPIQGKETRVTVIVRGRAIVAVEDDSYPIPADAAVIPGENLLLAPSLADLYSYSGEPGYEDRETLSQLVKTAIAGGFGDVAILPNTDPPLDQPQTLQWLKQRLNQIEGVNAHHQPPGDPQAENRPDSAPVQCHWWGSVTQGNQGKQLTEWGELDQAGVIGFSDGGAIQDWRLLQRALEYGAIAGKPLALVPLNLSLRGNGVMREGPLAIQLGLPPDPVMSEAAVIASLLELLPHYGTPVHFMRISTARGVELIVQAKSQGLNCTASVNWHHLLLSNEAIAHGLPPHTPHYDPNLRFDPPLGNEGDRLALIEGVKSGVIDAIAVDHQAFTYEEKTQTFAETPPGAIGYELVLPCLWQGLVEKNLITPMALWRALSTNPRRCLGLPEVSNSRILFDPDQAWTLKRGTLQTSAYNSPWWNHSLKGRVVAWES.

The tract at residues 121–140 is disordered; it reads VNAHHQPPGDPQAENRPDSA.

The protein belongs to the metallo-dependent hydrolases superfamily. DHOase family. PyrC' subfamily.

Its function is as follows. Non-functional DHOase. The polypeptide is Probable dihydroorotase-like protein (pyrC') (Synechocystis sp. (strain ATCC 27184 / PCC 6803 / Kazusa)).